We begin with the raw amino-acid sequence, 465 residues long: Calcitonin gene-related peptide type 1 receptor (465 aa).

The N-terminal stretch at 1–17 (MVICLLLCTPTDIFVVA) is a signal peptide. Residues 18 to 141 (SPEVNETQEY…HTNEGRMTAM (124 aa)) are Extracellular-facing. 4 N-linked (GlcNAc...) asparagine glycosylation sites follow: Asn22, Asn68, Asn120, and Asn125. 3 disulfide bridges follow: Cys50-Cys76, Cys67-Cys107, and Cys90-Cys129. A helical transmembrane segment spans residues 142–166 (NLFYLALIGHGLSLTSLLISLGIFF). The Cytoplasmic portion of the chain corresponds to 167–177 (YFKSLSCQRIT). A helical membrane pass occupies residues 178 to 200 (LHKNLFFSFVLNSVITIIWLTAV). Residues 201-211 (ANNQELVQRNP) are Extracellular-facing. A helical membrane pass occupies residues 212–240 (TSCKVSQFIHLYLFGCNYFWMLCEGIYLH). The Cytoplasmic segment spans residues 241–254 (TLIVVAVFAEKQHL). The chain crosses the membrane as a helical span at residues 255–275 (MWYYLLGWGFPLIPASIHAIA). At 276-291 (RSYYYNDNCWISSNTS) the chain is on the extracellular side. An N-linked (GlcNAc...) asparagine glycan is attached at Asn289. Residues 292-316 (LLYIIHGPICAALLVNLFFLLNIVR) traverse the membrane as a helical segment. Residues 317 to 331 (VLITKLKVTHQAESS) are Cytoplasmic-facing. A helical transmembrane segment spans residues 332 to 353 (LYMKAVRATLILVPLLGIQYVL). Topologically, residues 354-368 (LPYKPEGRVSSEIYD) are extracellular. The helical transmembrane segment at 369 to 389 (YIMHILMHYQGLLVATIFCFF) threads the bilayer. Topologically, residues 390–465 (NGEVQGVLRR…SILKSENPFT (76 aa)) are cytoplasmic.

The protein belongs to the G-protein coupled receptor 2 family.

The protein resides in the cell membrane. Its function is as follows. May function as G protein-coupled receptor for calcitonin-gene-related peptides and adrenomedullin. Specificity may be modulated by accessory proteins. May activate cAMP-dependent pathway. This Oncorhynchus gorbuscha (Pink salmon) protein is Calcitonin gene-related peptide type 1 receptor (calcrl).